Consider the following 181-residue polypeptide: Acetylcholinesterase (181 aa).

Residue Ser76 is the Acyl-ester intermediate of the active site. The active-site Charge relay system is the Glu132. A disordered region spans residues 162-181; sequence WQDQDNGGLPLTGNPTXPHN.

Belongs to the type-B carboxylesterase/lipase family. The N-terminus is blocked. Expressed by the venom gland. Is also probably expressed by liver and muscle.

The protein localises to the synapse. It localises to the secreted. It is found in the cell membrane. It catalyses the reaction acetylcholine + H2O = choline + acetate + H(+). In venom, its toxic role is unclear: it could result in less musculatory control by rapidly hydrolyzing acetylcholine, or that it works synergistically with alkaline phosphatase (ALP) in paralyzing prey through hypotension. In muscle, it terminates signal transduction at the neuromuscular junction by rapid hydrolysis of the acetylcholine released into the synaptic cleft. In liver, its function is unclear: it could serve as a safeguard against any diffusion of acetylcholine from synapses into the circulation. The sequence is that of Acetylcholinesterase (ACHE) from Naja oxiana (Central Asian cobra).